A 129-amino-acid polypeptide reads, in one-letter code: Iron-sulfur cluster assembly 1 homolog, mitochondrial (129 aa).

The N-terminal 12 residues, 1-12, are a transit peptide targeting the mitochondrion; it reads MSASIARATVRA. Residues cysteine 57, cysteine 121, and cysteine 123 each contribute to the Fe cation site.

The protein belongs to the HesB/IscA family.

The protein localises to the mitochondrion. Its function is as follows. Involved in the maturation of mitochondrial 4Fe-4S proteins functioning late in the iron-sulfur cluster assembly pathway. Probably involved in the binding of an intermediate of Fe/S cluster assembly. The chain is Iron-sulfur cluster assembly 1 homolog, mitochondrial (isca1) from Danio rerio (Zebrafish).